We begin with the raw amino-acid sequence, 119 residues long: Large ribosomal subunit protein uL18 (119 aa).

The protein belongs to the universal ribosomal protein uL18 family. As to quaternary structure, part of the 50S ribosomal subunit; part of the 5S rRNA/L5/L18/L25 subcomplex. Contacts the 5S and 23S rRNAs.

Functionally, this is one of the proteins that bind and probably mediate the attachment of the 5S RNA into the large ribosomal subunit, where it forms part of the central protuberance. This is Large ribosomal subunit protein uL18 from Sorangium cellulosum (strain So ce56) (Polyangium cellulosum (strain So ce56)).